A 330-amino-acid polypeptide reads, in one-letter code: DNA-directed RNA polymerase subunit alpha (330 aa).

The segment at 1-232 (MAILAFQKPD…YHFMLFSDEK (232 aa)) is alpha N-terminal domain (alpha-NTD). The segment at 248 to 330 (EEVLHMRQLL…DISKYKLDKE (83 aa)) is alpha C-terminal domain (alpha-CTD).

This sequence belongs to the RNA polymerase alpha chain family. Homodimer. The RNAP catalytic core consists of 2 alpha, 1 beta, 1 beta' and 1 omega subunit. When a sigma factor is associated with the core the holoenzyme is formed, which can initiate transcription.

The enzyme catalyses RNA(n) + a ribonucleoside 5'-triphosphate = RNA(n+1) + diphosphate. In terms of biological role, DNA-dependent RNA polymerase catalyzes the transcription of DNA into RNA using the four ribonucleoside triphosphates as substrates. The sequence is that of DNA-directed RNA polymerase subunit alpha from Bacteroides fragilis (strain ATCC 25285 / DSM 2151 / CCUG 4856 / JCM 11019 / LMG 10263 / NCTC 9343 / Onslow / VPI 2553 / EN-2).